A 436-amino-acid chain; its full sequence is Adenylosuccinate synthetase (436 aa).

Residues 12 to 18 (GDEGKGK) and 40 to 42 (GHT) contribute to the GTP site. Aspartate 13 (proton acceptor) is an active-site residue. The Mg(2+) site is built by aspartate 13 and glycine 40. IMP contacts are provided by residues 13–16 (DEGK), 38–41 (NAGH), threonine 128, arginine 142, glutamine 223, threonine 238, and arginine 302. Histidine 41 (proton donor) is an active-site residue. 298–304 (TTTGRRR) contributes to the substrate binding site. Residues arginine 304, 330 to 332 (KLD), and 412 to 414 (SLG) each bind GTP.

This sequence belongs to the adenylosuccinate synthetase family. In terms of assembly, homodimer. The cofactor is Mg(2+).

It localises to the cytoplasm. The catalysed reaction is IMP + L-aspartate + GTP = N(6)-(1,2-dicarboxyethyl)-AMP + GDP + phosphate + 2 H(+). Its pathway is purine metabolism; AMP biosynthesis via de novo pathway; AMP from IMP: step 1/2. In terms of biological role, plays an important role in the de novo pathway of purine nucleotide biosynthesis. Catalyzes the first committed step in the biosynthesis of AMP from IMP. This is Adenylosuccinate synthetase from Prochlorococcus marinus (strain MIT 9215).